A 218-amino-acid chain; its full sequence is Large ribosomal subunit protein mL54 (218 aa).

Belongs to the mitochondrion-specific ribosomal protein mL54 family. Component of the mitochondrial large ribosomal subunit (mt-LSU). Mature N.crassa 74S mitochondrial ribosomes consist of a small (37S) and a large (54S) subunit. The 37S small subunit contains a 16S ribosomal RNA (16S mt-rRNA) and 32 different proteins. The 54S large subunit contains a 23S rRNA (23S mt-rRNA) and 42 different proteins.

Its subcellular location is the mitochondrion. Its function is as follows. Component of the mitochondrial ribosome (mitoribosome), a dedicated translation machinery responsible for the synthesis of mitochondrial genome-encoded proteins, including at least some of the essential transmembrane subunits of the mitochondrial respiratory chain. The mitoribosomes are attached to the mitochondrial inner membrane and translation products are cotranslationally integrated into the membrane. The protein is Large ribosomal subunit protein mL54 (mrpl37) of Neurospora crassa (strain ATCC 24698 / 74-OR23-1A / CBS 708.71 / DSM 1257 / FGSC 987).